Reading from the N-terminus, the 219-residue chain is Thiamine-phosphate synthase (219 aa).

4-amino-2-methyl-5-(diphosphooxymethyl)pyrimidine is bound by residues 44–48 (QFREK) and asparagine 79. Residues aspartate 80 and aspartate 99 each contribute to the Mg(2+) site. A 4-amino-2-methyl-5-(diphosphooxymethyl)pyrimidine-binding site is contributed by serine 117. 2-[(2R,5Z)-2-carboxy-4-methylthiazol-5(2H)-ylidene]ethyl phosphate is bound at residue 143 to 145 (TST). Residue lysine 146 participates in 4-amino-2-methyl-5-(diphosphooxymethyl)pyrimidine binding. 2-[(2R,5Z)-2-carboxy-4-methylthiazol-5(2H)-ylidene]ethyl phosphate is bound by residues glycine 175 and 195–196 (IS).

Belongs to the thiamine-phosphate synthase family. Mg(2+) serves as cofactor.

The enzyme catalyses 2-[(2R,5Z)-2-carboxy-4-methylthiazol-5(2H)-ylidene]ethyl phosphate + 4-amino-2-methyl-5-(diphosphooxymethyl)pyrimidine + 2 H(+) = thiamine phosphate + CO2 + diphosphate. The catalysed reaction is 2-(2-carboxy-4-methylthiazol-5-yl)ethyl phosphate + 4-amino-2-methyl-5-(diphosphooxymethyl)pyrimidine + 2 H(+) = thiamine phosphate + CO2 + diphosphate. It catalyses the reaction 4-methyl-5-(2-phosphooxyethyl)-thiazole + 4-amino-2-methyl-5-(diphosphooxymethyl)pyrimidine + H(+) = thiamine phosphate + diphosphate. The protein operates within cofactor biosynthesis; thiamine diphosphate biosynthesis; thiamine phosphate from 4-amino-2-methyl-5-diphosphomethylpyrimidine and 4-methyl-5-(2-phosphoethyl)-thiazole: step 1/1. Functionally, condenses 4-methyl-5-(beta-hydroxyethyl)thiazole monophosphate (THZ-P) and 2-methyl-4-amino-5-hydroxymethyl pyrimidine pyrophosphate (HMP-PP) to form thiamine monophosphate (TMP). This Bacillus cereus (strain 03BB102) protein is Thiamine-phosphate synthase.